We begin with the raw amino-acid sequence, 475 residues long: F-box/kelch-repeat protein At1g22040 (475 aa).

The tract at residues 1-28 (MGSVMSLSCSKRKATSQDVECSSESRKR) is disordered. The 47-residue stretch at 41 to 87 (CRLIPSLPDELSIQILARLPRICYSSVRLVSRRWRSAVSTSEVYSLR) folds into the F-box domain. Kelch repeat units lie at residues 94-140 (EEWL…KSLS), 182-228 (GLYV…VLNK), 229-279 (KLYV…AFLA), 306-350 (PFFV…VDGE), and 352-401 (YAFD…GFHG).

This Arabidopsis thaliana (Mouse-ear cress) protein is F-box/kelch-repeat protein At1g22040.